The primary structure comprises 227 residues: Cytochrome c oxidase subunit 2 (227 aa).

Over 1–14 the chain is Mitochondrial intermembrane; the sequence is MAYPFQLGLQDATS. Residues 15 to 45 form a helical membrane-spanning segment; that stretch reads PIMEELTNFHDHTLMIVFLISTLVLYIISLM. Residues 46–59 are Mitochondrial matrix-facing; that stretch reads LTTKLTHTSTMDAQ. Residues 60–87 traverse the membrane as a helical segment; sequence EVETIWTILPAVILILIALPSLRILYMM. At 88–227 the chain is on the mitochondrial intermembrane side; sequence DEINNPVLTV…YFENWSASMI (140 aa). Residues His-161, Cys-196, Glu-198, Cys-200, His-204, and Met-207 each coordinate Cu cation. Glu-198 contributes to the Mg(2+) binding site. Tyr-218 bears the Phosphotyrosine mark.

The protein belongs to the cytochrome c oxidase subunit 2 family. As to quaternary structure, component of the cytochrome c oxidase (complex IV, CIV), a multisubunit enzyme composed of 14 subunits. The complex is composed of a catalytic core of 3 subunits MT-CO1, MT-CO2 and MT-CO3, encoded in the mitochondrial DNA, and 11 supernumerary subunits COX4I, COX5A, COX5B, COX6A, COX6B, COX6C, COX7A, COX7B, COX7C, COX8 and NDUFA4, which are encoded in the nuclear genome. The complex exists as a monomer or a dimer and forms supercomplexes (SCs) in the inner mitochondrial membrane with NADH-ubiquinone oxidoreductase (complex I, CI) and ubiquinol-cytochrome c oxidoreductase (cytochrome b-c1 complex, complex III, CIII), resulting in different assemblies (supercomplex SCI(1)III(2)IV(1) and megacomplex MCI(2)III(2)IV(2)). Found in a complex with TMEM177, COA6, COX18, COX20, SCO1 and SCO2. Interacts with TMEM177 in a COX20-dependent manner. Interacts with COX20. Interacts with COX16. It depends on Cu cation as a cofactor.

The protein localises to the mitochondrion inner membrane. The enzyme catalyses 4 Fe(II)-[cytochrome c] + O2 + 8 H(+)(in) = 4 Fe(III)-[cytochrome c] + 2 H2O + 4 H(+)(out). Its function is as follows. Component of the cytochrome c oxidase, the last enzyme in the mitochondrial electron transport chain which drives oxidative phosphorylation. The respiratory chain contains 3 multisubunit complexes succinate dehydrogenase (complex II, CII), ubiquinol-cytochrome c oxidoreductase (cytochrome b-c1 complex, complex III, CIII) and cytochrome c oxidase (complex IV, CIV), that cooperate to transfer electrons derived from NADH and succinate to molecular oxygen, creating an electrochemical gradient over the inner membrane that drives transmembrane transport and the ATP synthase. Cytochrome c oxidase is the component of the respiratory chain that catalyzes the reduction of oxygen to water. Electrons originating from reduced cytochrome c in the intermembrane space (IMS) are transferred via the dinuclear copper A center (CU(A)) of subunit 2 and heme A of subunit 1 to the active site in subunit 1, a binuclear center (BNC) formed by heme A3 and copper B (CU(B)). The BNC reduces molecular oxygen to 2 water molecules using 4 electrons from cytochrome c in the IMS and 4 protons from the mitochondrial matrix. The sequence is that of Cytochrome c oxidase subunit 2 (MT-CO2) from Leopoldamys sabanus (Long-tailed giant rat).